A 188-amino-acid chain; its full sequence is Ribosome-recycling factor (188 aa).

It belongs to the RRF family.

It is found in the cytoplasm. Its function is as follows. Responsible for the release of ribosomes from messenger RNA at the termination of protein biosynthesis. May increase the efficiency of translation by recycling ribosomes from one round of translation to another. The chain is Ribosome-recycling factor from Caulobacter sp. (strain K31).